Consider the following 102-residue polypeptide: uncharacterized protein (102 aa).

2 helical membrane passes run 24–44 and 55–75; these read AFIV…PVLT and IGAV…TWIL.

It is found in the cell membrane. This is an uncharacterized protein from Bacillus subtilis (strain 168).